The chain runs to 93 residues: Small ribosomal subunit protein bS20c (93 aa).

This sequence belongs to the bacterial ribosomal protein bS20 family.

It localises to the plastid. The protein localises to the chloroplast. Its function is as follows. Binds directly to 16S ribosomal RNA. This Phaeodactylum tricornutum (strain CCAP 1055/1) protein is Small ribosomal subunit protein bS20c.